The sequence spans 177 residues: Neuroblastoma suppressor of tumorigenicity 1 (177 aa).

A signal peptide spans M1–A16. Intrachain disulfides connect C34/C84, C48/C98, C58/C117, C62/C119, and C81/C122. A CTCK domain is found at C34–G123. The interval M143–E177 is disordered.

This sequence belongs to the DAN family.

The protein localises to the secreted. In terms of biological role, may act as a tumor suppressor. This is Neuroblastoma suppressor of tumorigenicity 1 (NBL1) from Gallus gallus (Chicken).